A 347-amino-acid chain; its full sequence is Rhodopsin (347 aa).

Over 1-33 (TEGPDFYIPMVNTTGVVRSPYEYPQYYLVNPAA) the chain is Extracellular. An N-linked (GlcNAc...) asparagine glycan is attached at N12. The chain crosses the membrane as a helical span at residues 34 to 58 (YAVLGAYMFFLIIVGFPINFLTLYV). The Cytoplasmic portion of the chain corresponds to 59–70 (TLEHKKLRTPLN). Residues 71–93 (YILLNLAVADLFMVIGGFTTTMY) form a helical membrane-spanning segment. At 94–107 (SSMHGYFVLGRLGC) the chain is on the extracellular side. An intrachain disulfide couples C107 to C184. The helical transmembrane segment at 108–130 (NIEGFFATLGGMISLWSLAVLAI) threads the bilayer. Positions 131 to 133 (ERW) match the 'Ionic lock' involved in activated form stabilization motif. Residues 131–149 (ERWVVVCKPISNFRFGENH) lie on the Cytoplasmic side of the membrane. Residues 150 to 170 (AIMGVSLTWVMALACTVPPLV) form a helical membrane-spanning segment. The Extracellular segment spans residues 171–199 (GWSRYIPEGMQCACGIDYYTRAEGYNNES). Residue N197 is glycosylated (N-linked (GlcNAc...) asparagine). The chain crosses the membrane as a helical span at residues 200 to 221 (FVIYMFTFHFLFPMFIIFFCYG). The Cytoplasmic segment spans residues 222-249 (RLLCAVKEAAAAQQESETTQRAEREVTR). A helical transmembrane segment spans residues 250-271 (MVILMVIGYLVCWLPYASVAWF). The Extracellular portion of the chain corresponds to 272–283 (IFTHKGSEFGPL). A helical membrane pass occupies residues 284 to 305 (FMAVPSFFAKSSSIYNPIIYIC). At K293 the chain carries N6-(retinylidene)lysine. The Cytoplasmic portion of the chain corresponds to 306–347 (MNKQFRQCMITTLFCGKNPFEGQEEDSSTKTEASSASSVSPA). C320 is lipidated: S-palmitoyl cysteine. The tract at residues 326–347 (EGQEEDSSTKTEASSASSVSPA) is disordered. The span at 335–347 (KTEASSASSVSPA) shows a compositional bias: low complexity.

This sequence belongs to the G-protein coupled receptor 1 family. Opsin subfamily. Post-translationally, phosphorylated on some or all of the serine and threonine residues present in the C-terminal region. In terms of processing, contains one covalently linked retinal chromophore.

It is found in the membrane. The protein resides in the cell projection. The protein localises to the cilium. It localises to the photoreceptor outer segment. Functionally, photoreceptor required for image-forming vision at low light intensity. While most salt water fish species use retinal as chromophore, most freshwater fish use 3-dehydroretinal, or a mixture of retinal and 3-dehydroretinal. Light-induced isomerization of 11-cis to all-trans retinal triggers a conformational change that activates signaling via G-proteins. Subsequent receptor phosphorylation mediates displacement of the bound G-protein alpha subunit by arrestin and terminates signaling. The protein is Rhodopsin (rho) of Sargocentron spiniferum (Sabre squirrelfish).